The chain runs to 113 residues: U11-theraphotoxin-Hhn1a (113 aa).

The first 21 residues, 1-21, serve as a signal peptide directing secretion; sequence MNTVRVTFLLVFVLAVSLGQA. The propeptide occupies 22 to 74; it reads DKDENRMEMQEKTEQGKGYLDFAENLLPQKLEELEAKLLEEDSEESRNSRQKR. Basic and acidic residues predominate over residues 59–69; the sequence is LLEEDSEESRN. The disordered stretch occupies residues 59-83; it reads LLEEDSEESRNSRQKRCIGEGVPCD. 3 disulfides stabilise this stretch: Cys75–Cys90, Cys82–Cys95, and Cys89–Cys110.

The protein belongs to the neurotoxin 14 (magi-1) family. 01 (HNTX-16) subfamily. As to expression, expressed by the venom gland.

Its subcellular location is the secreted. Probable ion channel inhibitor. In Cyriopagopus hainanus (Chinese bird spider), this protein is U11-theraphotoxin-Hhn1a.